The sequence spans 141 residues: Phosphoribosyl-AMP cyclohydrolase (141 aa).

Aspartate 91 serves as a coordination point for Mg(2+). Cysteine 92 contributes to the Zn(2+) binding site. Residues aspartate 93 and aspartate 95 each contribute to the Mg(2+) site. The Zn(2+) site is built by cysteine 110 and cysteine 117.

The protein belongs to the PRA-CH family. Homodimer. The cofactor is Mg(2+). It depends on Zn(2+) as a cofactor.

It localises to the cytoplasm. The enzyme catalyses 1-(5-phospho-beta-D-ribosyl)-5'-AMP + H2O = 1-(5-phospho-beta-D-ribosyl)-5-[(5-phospho-beta-D-ribosylamino)methylideneamino]imidazole-4-carboxamide. Its pathway is amino-acid biosynthesis; L-histidine biosynthesis; L-histidine from 5-phospho-alpha-D-ribose 1-diphosphate: step 3/9. In terms of biological role, catalyzes the hydrolysis of the adenine ring of phosphoribosyl-AMP. This is Phosphoribosyl-AMP cyclohydrolase from Brucella anthropi (strain ATCC 49188 / DSM 6882 / CCUG 24695 / JCM 21032 / LMG 3331 / NBRC 15819 / NCTC 12168 / Alc 37) (Ochrobactrum anthropi).